The following is a 148-amino-acid chain: Ribosome maturation factor RimP (148 aa).

Belongs to the RimP family.

Its subcellular location is the cytoplasm. Functionally, required for maturation of 30S ribosomal subunits. This is Ribosome maturation factor RimP from Nautilia profundicola (strain ATCC BAA-1463 / DSM 18972 / AmH).